Reading from the N-terminus, the 544-residue chain is CTP synthase (544 aa).

An amidoligase domain region spans residues 1 to 266 (MTKFIFVTGG…DDLICERFGL (266 aa)). Residue S13 coordinates CTP. A UTP-binding site is contributed by S13. Residues 14 to 19 (SLGKGI) and D71 each bind ATP. 2 residues coordinate Mg(2+): D71 and E140. Residues 147-149 (DIE), 187-192 (KTKPTQ), and K223 each bind CTP. Residues 187–192 (KTKPTQ) and K223 contribute to the UTP site. Residues 291–543 (TVAMVGKYVE…VKAAKNYSEA (253 aa)) form the Glutamine amidotransferase type-1 domain. An L-glutamine-binding site is contributed by G354. The active-site Nucleophile; for glutamine hydrolysis is C381. Residues 382-385 (LGMQ), E404, and R471 each bind L-glutamine. Active-site residues include H516 and E518.

This sequence belongs to the CTP synthase family. As to quaternary structure, homotetramer.

The catalysed reaction is UTP + L-glutamine + ATP + H2O = CTP + L-glutamate + ADP + phosphate + 2 H(+). The enzyme catalyses L-glutamine + H2O = L-glutamate + NH4(+). It catalyses the reaction UTP + NH4(+) + ATP = CTP + ADP + phosphate + 2 H(+). The protein operates within pyrimidine metabolism; CTP biosynthesis via de novo pathway; CTP from UDP: step 2/2. Allosterically activated by GTP, when glutamine is the substrate; GTP has no effect on the reaction when ammonia is the substrate. The allosteric effector GTP functions by stabilizing the protein conformation that binds the tetrahedral intermediate(s) formed during glutamine hydrolysis. Inhibited by the product CTP, via allosteric rather than competitive inhibition. Its function is as follows. Catalyzes the ATP-dependent amination of UTP to CTP with either L-glutamine or ammonia as the source of nitrogen. Regulates intracellular CTP levels through interactions with the four ribonucleotide triphosphates. This is CTP synthase from Psychrobacter cryohalolentis (strain ATCC BAA-1226 / DSM 17306 / VKM B-2378 / K5).